The chain runs to 310 residues: Elongation factor Ts (310 aa).

Residues 80 to 83 (TDFV) are involved in Mg(2+) ion dislocation from EF-Tu.

This sequence belongs to the EF-Ts family.

It localises to the cytoplasm. Functionally, associates with the EF-Tu.GDP complex and induces the exchange of GDP to GTP. It remains bound to the aminoacyl-tRNA.EF-Tu.GTP complex up to the GTP hydrolysis stage on the ribosome. This chain is Elongation factor Ts, found in Methylocella silvestris (strain DSM 15510 / CIP 108128 / LMG 27833 / NCIMB 13906 / BL2).